The chain runs to 73 residues: Large ribosomal subunit protein bL31 (73 aa).

4 residues coordinate Zn(2+): C16, C18, C36, and C39.

Belongs to the bacterial ribosomal protein bL31 family. Type A subfamily. Part of the 50S ribosomal subunit. The cofactor is Zn(2+).

Binds the 23S rRNA. In Desulfotalea psychrophila (strain LSv54 / DSM 12343), this protein is Large ribosomal subunit protein bL31.